The chain runs to 163 residues: Transcription antitermination protein NusB (163 aa).

It belongs to the NusB family.

Involved in transcription antitermination. Required for transcription of ribosomal RNA (rRNA) genes. Binds specifically to the boxA antiterminator sequence of the ribosomal RNA (rrn) operons. This chain is Transcription antitermination protein NusB, found in Granulibacter bethesdensis (strain ATCC BAA-1260 / CGDNIH1).